A 205-amino-acid chain; its full sequence is Inactive ribonuclease-like protein 9 (205 aa).

The signal sequence occupies residues 1 to 26 (MMRTLITTHPLPLLLLPQQLLQLVQF). Intrachain disulfides connect C116–C168 and C123–C130. N131 and N143 each carry an N-linked (GlcNAc...) asparagine glycan.

It belongs to the pancreatic ribonuclease family. In terms of tissue distribution, at the mRNA level, widely expressed. At protein level, restricted to epididymis. Expressed in spermatozoa (sperm head and neck), with higher levels on ejaculated and epididymal sperm than on testicular sperm (at protein level). Expressed in the epithelial cells of the epididymal tubule (at protein level). Not detected in muscle.

The protein localises to the secreted. Functionally, does not exhibit any ribonuclease activity. This is Inactive ribonuclease-like protein 9 (RNASE9) from Homo sapiens (Human).